A 314-amino-acid polypeptide reads, in one-letter code: 2,3-dihydroxyphenylpropionate/2,3-dihydroxicinnamic acid 1,2-dioxygenase (314 aa).

Catalysis depends on H115, which acts as the Proton donor. The Proton acceptor role is filled by H179.

The protein belongs to the LigB/MhpB extradiol dioxygenase family. Homotetramer. Fe(2+) serves as cofactor.

It catalyses the reaction 3-(2,3-dihydroxyphenyl)propanoate + O2 = (2Z,4E)-2-hydroxy-6-oxonona-2,4-dienedioate + H(+). The catalysed reaction is (2E)-3-(2,3-dihydroxyphenyl)prop-2-enoate + O2 = (2Z,4E,7E)-2-hydroxy-6-oxonona-2,4,7-trienedioate + H(+). It functions in the pathway aromatic compound metabolism; 3-phenylpropanoate degradation. Functionally, catalyzes the non-heme iron(II)-dependent oxidative cleavage of 2,3-dihydroxyphenylpropionic acid and 2,3-dihydroxicinnamic acid into 2-hydroxy-6-ketononadienedioate and 2-hydroxy-6-ketononatrienedioate, respectively. The protein is 2,3-dihydroxyphenylpropionate/2,3-dihydroxicinnamic acid 1,2-dioxygenase of Escherichia coli O157:H7.